The following is a 352-amino-acid chain: Heat-inducible transcription repressor HrcA (352 aa).

It belongs to the HrcA family.

Its function is as follows. Negative regulator of class I heat shock genes (grpE-dnaK-dnaJ and groELS operons). Prevents heat-shock induction of these operons. The protein is Heat-inducible transcription repressor HrcA of Latilactobacillus sakei (Lactobacillus sakei).